A 455-amino-acid chain; its full sequence is MDETQGPLAMTVHLLANSGHGSLLQRTLDQLLDCICPEVRLFQVSERASPVKYCEKSHSKRSRFPGMSVLLFLHESPGEDRLFRVLDSLQHSPWQCYPTQDTRGRLCPYFFANQEFYSLDSQLPIWGVRQVHCGSEILRVTLYCSFDNYEDAIRLYEMILQREATLQKSNFCFFVLYASKSFALQLSLKQLPPGMSVDPKESSVLQFKVQEIGQLVPLLPNPCMPISSTRWQTQDYDGNKILLQVQLNPELGVKNGILGAGMLPLGSRLTSVSAKRTSEPRSQRNQGKRSQGHSLELPEPSGSPTSDRCAGTSWKSPGRSFQVSSPAMGAHLHLSSHHLESGARMKVLNRENSFQKLEAETNVDTGLTIINSEPRQTYFGGFPRDLQTSQPPFCLPASSLGVATSKNNSVLKERVSPLPLAGQRDLGTRKTISECLLHLQVQGEEKEEDEEEFFI.

Ser-49 carries the phosphoserine modification. The tract at residues 270 to 322 (TSVSAKRTSEPRSQRNQGKRSQGHSLELPEPSGSPTSDRCAGTSWKSPGRSFQ) is disordered. Positions 313 to 322 (SWKSPGRSFQ) are enriched in polar residues.

The protein belongs to the FAM124 family. As to quaternary structure, interacts with CHD7 and CHD8.

It localises to the nucleus. This Homo sapiens (Human) protein is Protein FAM124B (FAM124B).